Here is a 300-residue protein sequence, read N- to C-terminus: Cholesterol 25-hydroxylase-like protein (300 aa).

A glycan (N-linked (GlcNAc...) asparagine) is linked at N9. Transmembrane regions (helical) follow at residues 54–73 (YTWV…VPFF), 95–115 (LQGW…LIWV), and 130–152 (MLSQ…HYIN). The Fatty acid hydroxylase domain occupies 135 to 266 (AIFFLAFDFT…WFNYLDRLMG (132 aa)). The short motif at 148–152 (FHYIN) is the Histidine box-1 element. The Histidine box-2 signature appears at 163–167 (HSVHH). Residues 192 to 212 (ITTIPWIFPTHCLTYWIWFFI) form a helical membrane-spanning segment. The Histidine box-3 signature appears at 242–248 (AHDMHHL).

Belongs to the sterol desaturase family. The cofactor is Fe cation.

It is found in the membrane. Functionally, probable sterol desaturase. This is Cholesterol 25-hydroxylase-like protein from Caenorhabditis elegans.